A 743-amino-acid chain; its full sequence is Merozoite surface protein 9 (743 aa).

An N-terminal signal peptide occupies residues Met-1–Cys-23. An interaction with MSP1 and host SLC4A1/Band 3 region spans residues Lys-77–Glu-235. Disordered stretches follow at residues Lys-202 to Tyr-282, Asp-459 to Asp-487, Asn-512 to Asp-540, and Val-666 to Lys-743. Positions Ser-211–Gln-224 are enriched in polar residues. 8 repeat units span residues Val-226–Asp-231, Val-232–Asp-237, Thr-238–Asp-243, Thr-244–Asp-249, Thr-250–Asp-255, Thr-256–Asp-261, Thr-262–Asp-267, and Thr-268–Asp-273. An 8 X 6 AA tandem repeats of [VT]-N-D-[ED]-[ED]-D region spans residues Val-226–Asp-273. Acidic residues predominate over residues Val-226 to His-274. Residues Leu-364 to Lys-528 form an interaction with MSP1 and host SLC4A1/Band 3 region. The segment covering Asp-459–Val-473 has biased composition (basic and acidic residues). Low complexity predominate over residues Asn-512–Thr-521. A coiled-coil region spans residues Asn-644–Ile-732. The span at Lys-672–Glu-722 shows a compositional bias: basic and acidic residues. Residues Glu-723–Val-733 show a composition bias toward acidic residues.

Belongs to the plasmodium ABRA family. In terms of assembly, forms a complex composed of MSP1, MSP6, MSP7, MSP9 and MSP3; within the complex, MSP6 and MSP9 mediate the binding to the host erythrocyte. Interacts with MSP1 subunits p19 and p42; the interaction is direct. Interacts with host SLC4A1/Band 3 protein (via the 5ABC region). MSP1 subunits p19 or p42, and MSP9 form a co-ligand complex that interacts with host SLC4A1/Band 3 protein. In terms of processing, not glycosylated.

The protein resides in the cell membrane. Its subcellular location is the parasitophorous vacuole lumen. It is found in the secreted. Functionally, during the asexual blood stage, involved in the sialic acid-independent (SAID) merozoite invasion of host erythrocytes by binding to host SLC4A1/Band 3 protein on the surface of the host erythrocyte. This Plasmodium falciparum (isolate Camp / Malaysia) protein is Merozoite surface protein 9.